The primary structure comprises 529 residues: Bifunctional purine biosynthesis protein PurH (529 aa).

An MGS-like domain is found at 1-148 (MQQRRPVRRA…KNHKDVAIVV (148 aa)). An N6-acetyllysine modification is found at Lys287.

The protein belongs to the PurH family.

It carries out the reaction (6R)-10-formyltetrahydrofolate + 5-amino-1-(5-phospho-beta-D-ribosyl)imidazole-4-carboxamide = 5-formamido-1-(5-phospho-D-ribosyl)imidazole-4-carboxamide + (6S)-5,6,7,8-tetrahydrofolate. The catalysed reaction is IMP + H2O = 5-formamido-1-(5-phospho-D-ribosyl)imidazole-4-carboxamide. The protein operates within purine metabolism; IMP biosynthesis via de novo pathway; 5-formamido-1-(5-phospho-D-ribosyl)imidazole-4-carboxamide from 5-amino-1-(5-phospho-D-ribosyl)imidazole-4-carboxamide (10-formyl THF route): step 1/1. It participates in purine metabolism; IMP biosynthesis via de novo pathway; IMP from 5-formamido-1-(5-phospho-D-ribosyl)imidazole-4-carboxamide: step 1/1. The sequence is that of Bifunctional purine biosynthesis protein PurH from Escherichia coli (strain 55989 / EAEC).